We begin with the raw amino-acid sequence, 491 residues long: Probable glycine dehydrogenase (decarboxylating) subunit 2 (491 aa).

At K273 the chain carries N6-(pyridoxal phosphate)lysine.

The protein belongs to the GcvP family. C-terminal subunit subfamily. The glycine cleavage system is composed of four proteins: P, T, L and H. In this organism, the P 'protein' is a heterodimer of two subunits. Pyridoxal 5'-phosphate serves as cofactor.

The enzyme catalyses N(6)-[(R)-lipoyl]-L-lysyl-[glycine-cleavage complex H protein] + glycine + H(+) = N(6)-[(R)-S(8)-aminomethyldihydrolipoyl]-L-lysyl-[glycine-cleavage complex H protein] + CO2. In terms of biological role, the glycine cleavage system catalyzes the degradation of glycine. The P protein binds the alpha-amino group of glycine through its pyridoxal phosphate cofactor; CO(2) is released and the remaining methylamine moiety is then transferred to the lipoamide cofactor of the H protein. In Bacillus cereus (strain ATCC 10987 / NRS 248), this protein is Probable glycine dehydrogenase (decarboxylating) subunit 2.